Reading from the N-terminus, the 414-residue chain is Dihydroorotase (414 aa).

Positions 56 and 58 each coordinate Zn(2+). Substrate contacts are provided by residues 58–60 and Asn90; that span reads HFR. Zn(2+) is bound by residues Lys138, His171, His219, and Asp280. Position 138 is an N6-carboxylysine (Lys138). Asp280 is an active-site residue. Substrate is bound at residue His284.

This sequence belongs to the metallo-dependent hydrolases superfamily. DHOase family. Class I DHOase subfamily. Requires Zn(2+) as cofactor.

The catalysed reaction is (S)-dihydroorotate + H2O = N-carbamoyl-L-aspartate + H(+). It participates in pyrimidine metabolism; UMP biosynthesis via de novo pathway; (S)-dihydroorotate from bicarbonate: step 3/3. Its function is as follows. Catalyzes the reversible cyclization of carbamoyl aspartate to dihydroorotate. This chain is Dihydroorotase, found in Thermoplasma acidophilum (strain ATCC 25905 / DSM 1728 / JCM 9062 / NBRC 15155 / AMRC-C165).